The primary structure comprises 866 residues: Protein aubergine (866 aa).

M1 is modified (N-acetylmethionine). The tract at residues 1–61 (MNLPPNPVIA…GGGDAQVGPS (61 aa)) is disordered. Symmetric dimethylarginine occurs at positions 11, 13, 15, and 17. Residues 46–56 (ASGGNGGGGDA) show a composition bias toward gly residues. Residues 281 to 390 (TLYNILSDAI…IIPELARATG (110 aa)) form the PAZ domain. Positions 555 to 852 (IVMVVMRSPN…LAFLVAESIN (298 aa)) constitute a Piwi domain.

The protein belongs to the argonaute family. Piwi subfamily. As to quaternary structure, component of the ping-pong piRNA processing (4P) complex consisting of krimp, aub and AGO3. Interacts (via N-terminus when symmetrically dimethylated on arginine residues) with krimp (via tudor domain); this interaction requires methylation of at least one N-terminal arginie residue. Interacts with vas and AGO3. May form part of a piRNA processing complex consisting of tud, aub and AGO3. Interacts (when symmetrically dimethylated on arginine residues) with tud; methylation and/or interaction requires association with piRNA. Interacts (via N-terminus and when associated with piRNA) with csul/PRMT5; the interaction recruits the PRMT5 methylosome complex to modify N-terminal arginines by symmetrical dimethylation but involves residues other than the arginines to be modified. Forms a complex with smg, twin, AGO3, nanos mRNA and piRNAs that targets the nanos 3'-untranslated region, in early embryos. Interacts with nanos mRNA and rump (in an RNA-dependent manner). Interacts with papi and vret. Interacts with me31B. Symmetrical dimethylation of arginines (sDMA) on Arg-11, Arg-13 and/or Arg-15 by csul/PRMT5/DART5, is required for binding to tud, localization to the pole plasm and association with the correct piRNAs. SDMA on Arg-11, Arg-13, Arg-15 and/or Arg-17 is required for binding to krimp and stable recruitment to subregions of the nuage. Methylation state does not affect protein stability. SDMA plays an important role in ping-pong amplification of piRNAs and is essential for function in vivo. Methylation state functions as an indicator of its piRNA binding state. PiRNA binding promotes sDMA modification; piRNA binding induces a conformational change that exposes the N-terminal arginines, making them available to the methylosome complex. As to expression, expressed in ovary. In the germarium, found in germline stem and cyst cells. In egg chambers from stage 6, expressed both in nurse cells and oocytes. In embryos, accumulates in the pole cells, although low expression is detected throughout the entire embryo. In testis, expressed in germline stem cells, gonialblast and spermatogonia cells (at protein level). In the adult brain, expressed in the ellipsoid body, the mushroom body subdivision in the peduncle and the cell body layer. Expressed specifically in alpha'/beta' and gamma neurons.

The protein resides in the cytoplasm. It localises to the cytosol. It is found in the perinuclear region. Its subcellular location is the cytoplasmic ribonucleoprotein granule. In terms of biological role, component of the perinuclear meiotic nuage, a germline-specific subcellular membraneless ribonucleoprotein compartment involved in production of transposable element-repressing Piwi-interacting RNA (piRNA)-induced silencing complexes (piRISCs), which are essential for maintaining germline integrity during oogenesis; essential for the formation and/or structural integrity of nuage particles. Acts via the Piwi-interacting RNA (piRNA) metabolic process, which mediates the repression of transposable elements during meiosis by forming complexes composed of piRNAs and Piwi proteins and governs the methylation and subsequent repression of transposons. Directly binds piRNAs, a class of 24 to 30 nucleotide RNAs that are generated by a Dicer-independent mechanism and are primarily derived from transposons and other repeated sequence elements. Shows RNA cleavage or slicer activity; including aub-piRNA complexes from ovary and testis. When loaded with guide piRNAs recognizes and cleaves complementary RNAs to repress their expression and produce complementary piRNAs. Together with Piwi protein AGO3 recruited to subregions of the perinuclear nuage by krimp, which coordinates their activity in the ping-pong amplification step of secondary piRNA biogenesis. Krimp recruits piRNA bound aub and unbound AGO3, bringing them into close proximity to facilitate the loading onto AGO3 of freshly cut piRNAs generated by aub cleavage of target sequences; krimp recognizes the piRNA loading state of the Piwi proteins via symmetrically dimethylated arginine modification in their N-terminus. Important for asymmetric ping-pong amplification to bias production towards antisense piRNAs capable of silencing transposable elements. Required for the localization of mael and krimp to the meiotic nuage. In ovary, associates predominantly with antisense piRNAs that contain uridine at their 5' end. In testis, associates with Su(Ste) antisense piRNAs (most abundant class of piRNAs found in complex with aub in testes) and negatively regulates Ste expression, most likely by cleaving its transcripts. Also in testis, may repress translation of vas when associated with a piRNA derived from chromosome X, termed AT-chX-1, whose sequence shows strong complementarity to vas mRNA. Involved in repression of long interspersed nuclear elements (LINEs) including HeT-A, I-element and TART LINEs. Repression of specialized telomeric retroelements HeT-A and TART is involved in telomere regulation; Drosophila telomeres being maintained by transposition of specialized telomeric retroelements. Also involved in telomeric trans-silencing, a repression mechanism by which a transposon or a transgene inserted in subtelomeric heterochromatin has the capacity to repress in trans, in the female germline, a homologous transposon, or transgene located in euchromatin. Involved in the suppression of meiotic drive of sex chromosomes and autosomes. Involved in transposon silencing in the adult brain. Required for dorsal-ventral as well as anterior-posterior patterning of the egg. Required during oogenesis for primordial germ cell formation and activation of RNA interference. During early oogenesis, required for osk mRNA silencing and polarization of the microtubule cytoskeleton. During mid-oogenesis, required for osk mRNA localization to the posterior pole and efficient translation of osk and grk. During embryogenesis, required for posterior localization of nanos (nos) mRNA, independently of osk, and pole cell formation. Forms a complex with smg, twin, AGO3 and specific piRNAs that targets nanos mRNA (and probably other maternal mRNAS) for deadenylation promoting its decay during early embryogenesis. In Drosophila melanogaster (Fruit fly), this protein is Protein aubergine.